The primary structure comprises 154 residues: Jupiter microtubule associated homolog 1 (154 aa).

Met-1 carries the post-translational modification N-acetylmethionine. A compositionally biased stretch (polar residues) spans 1–19 (MTTTTTFKGVDPNSRNSSR). Residues 1 to 154 (MTTTTTFKGV…PGGKSSLVLG (154 aa)) form a disordered region. Thr-2 is subject to N-acetylthreonine; in Hematological and neurological expressed 1 protein, N-terminally processed. Phosphoserine is present on residues Ser-28 and Ser-31. Thr-54 bears the Phosphothreonine mark. Phosphoserine is present on residues Ser-71, Ser-80, Ser-87, Ser-88, and Ser-92. The span at 80–91 (SGPQRRNSSEAN) shows a compositional bias: polar residues. Residues 96-108 (LDLKGEGDVHENV) are compositionally biased toward basic and acidic residues. Positions 125–138 (PAAPVPSPVAPAPV) are enriched in pro residues. Ser-131 carries the post-translational modification Phosphoserine. Lys-148 is subject to N6-acetyllysine.

This sequence belongs to the JUPITER family. In terms of assembly, interacts with the complex composed, at least, of APC, CTNNB1 and GSK3B; the interaction takes place with the inactive form of GSK3B (phosphorylated at 'Ser-9').

The protein localises to the nucleus. It is found in the cytoplasm. Modulates negatively AKT-mediated GSK3B signaling. Induces CTNNB1 'Ser-33' phosphorylation and degradation through the suppression of the inhibitory 'Ser-9' phosphorylation of GSK3B, which represses the function of the APC:CTNNB1:GSK3B complex and the interaction with CDH1/E-cadherin in adherent junctions. Plays a role in the regulation of cell cycle and cell adhesion. Has an inhibitory role on AR-signaling pathway through the induction of receptor proteasomal degradation. This chain is Jupiter microtubule associated homolog 1, found in Bos taurus (Bovine).